Consider the following 901-residue polypeptide: Protein translocase subunit SecA (901 aa).

Residues glutamine 85, 103-107, and aspartate 510 each bind ATP; that span reads GEGKT. The interval 847–901 is disordered; it reads TRINQNNLPVDENSQTTQNSETEDYSDRRIGRNEPCPCGSGKKYKHCHGSRVARQ. Positions 848–866 are enriched in polar residues; the sequence is RINQNNLPVDENSQTTQNS. 4 residues coordinate Zn(2+): cysteine 882, cysteine 884, cysteine 893, and histidine 894. The segment covering 888-901 has biased composition (basic residues); sequence KKYKHCHGSRVARQ.

It belongs to the SecA family. As to quaternary structure, monomer and homodimer. Part of the essential Sec protein translocation apparatus which comprises SecA, SecYEG and auxiliary proteins SecDF-YajC and YidC. The cofactor is Zn(2+).

It localises to the cell inner membrane. Its subcellular location is the cytoplasm. The catalysed reaction is ATP + H2O + cellular proteinSide 1 = ADP + phosphate + cellular proteinSide 2.. In terms of biological role, part of the Sec protein translocase complex. Interacts with the SecYEG preprotein conducting channel. Has a central role in coupling the hydrolysis of ATP to the transfer of proteins into and across the cell membrane, serving both as a receptor for the preprotein-SecB complex and as an ATP-driven molecular motor driving the stepwise translocation of polypeptide chains across the membrane. This Haemophilus influenzae (strain PittGG) protein is Protein translocase subunit SecA.